The following is a 475-amino-acid chain: Ribulose bisphosphate carboxylase large chain (475 aa).

Positions 1–2 (MS) are excised as a propeptide. Position 3 is an N-acetylproline (Pro-3). Lys-14 is modified (N6,N6,N6-trimethyllysine). Residues Asn-123 and Thr-173 each coordinate substrate. Lys-175 (proton acceptor) is an active-site residue. Residue Lys-177 coordinates substrate. The Mg(2+) site is built by Lys-201, Asp-203, and Glu-204. The residue at position 201 (Lys-201) is an N6-carboxylysine. His-294 acts as the Proton acceptor in catalysis. Residues Arg-295, His-327, and Ser-379 each contribute to the substrate site.

The protein belongs to the RuBisCO large chain family. Type I subfamily. In terms of assembly, heterohexadecamer of 8 large chains and 8 small chains; disulfide-linked. The disulfide link is formed within the large subunit homodimers. It depends on Mg(2+) as a cofactor. Post-translationally, the disulfide bond which can form in the large chain dimeric partners within the hexadecamer appears to be associated with oxidative stress and protein turnover.

It localises to the plastid. The protein localises to the chloroplast. The catalysed reaction is 2 (2R)-3-phosphoglycerate + 2 H(+) = D-ribulose 1,5-bisphosphate + CO2 + H2O. It carries out the reaction D-ribulose 1,5-bisphosphate + O2 = 2-phosphoglycolate + (2R)-3-phosphoglycerate + 2 H(+). Functionally, ruBisCO catalyzes two reactions: the carboxylation of D-ribulose 1,5-bisphosphate, the primary event in carbon dioxide fixation, as well as the oxidative fragmentation of the pentose substrate in the photorespiration process. Both reactions occur simultaneously and in competition at the same active site. In Chara vulgaris (Common stonewort), this protein is Ribulose bisphosphate carboxylase large chain.